We begin with the raw amino-acid sequence, 393 residues long: S-adenosylmethionine synthase (393 aa).

Residue glutamate 9 coordinates Mg(2+). Residue histidine 15 coordinates ATP. K(+) is bound at residue glutamate 43. Glutamate 56 and glutamine 99 together coordinate L-methionine. ATP is bound by residues 167–169 (DGK), 235–238 (SGRF), aspartate 246, 252–253 (RK), alanine 269, lysine 273, and lysine 277. L-methionine is bound at residue aspartate 246. Lysine 277 serves as a coordination point for L-methionine.

This sequence belongs to the AdoMet synthase family. In terms of assembly, homotetramer. It depends on Mn(2+) as a cofactor. The cofactor is Mg(2+). Co(2+) serves as cofactor. Requires K(+) as cofactor.

It is found in the cytoplasm. The catalysed reaction is L-methionine + ATP + H2O = S-adenosyl-L-methionine + phosphate + diphosphate. It functions in the pathway amino-acid biosynthesis; S-adenosyl-L-methionine biosynthesis; S-adenosyl-L-methionine from L-methionine: step 1/1. In terms of biological role, catalyzes the formation of S-adenosylmethionine from methionine and ATP. The reaction comprises two steps that are both catalyzed by the same enzyme: formation of S-adenosylmethionine (AdoMet) and triphosphate, and subsequent hydrolysis of the triphosphate. The polypeptide is S-adenosylmethionine synthase (SAMS) (Solanum palustre (Non-tuber-performing potato)).